Reading from the N-terminus, the 155-residue chain is Endoribonuclease YbeY (155 aa).

Residues histidine 114, histidine 118, and histidine 124 each contribute to the Zn(2+) site.

It belongs to the endoribonuclease YbeY family. Requires Zn(2+) as cofactor.

It is found in the cytoplasm. Single strand-specific metallo-endoribonuclease involved in late-stage 70S ribosome quality control and in maturation of the 3' terminus of the 16S rRNA. The sequence is that of Endoribonuclease YbeY from Photorhabdus laumondii subsp. laumondii (strain DSM 15139 / CIP 105565 / TT01) (Photorhabdus luminescens subsp. laumondii).